We begin with the raw amino-acid sequence, 510 residues long: MGGDDLSFTRLVITALFGLLMLLQIKETSASTSFVSSSVCKSDHLTYTKPYQQGSLFTINGNPVEKLRFCEALRFHKANGCIFEDSFSDDFCTIHSLLGRRFLEEKTVKDSKNSKPKTEYSHVKVSIAGSGFLLLCCALCCPCFHKERKANSHEVLPKESNSVHQVSSFEMSPSSEKIPQSPFRAPPSPSRVPQSPSRYAMSPRPSRLGPLNLTMSQINTATGNFADSHQIGEGGFGVVFKGVLDDGQVVAIKRAKKEHFENLRTEFKSEVDLLSKIGHRNLVKLLGYVDKGDERLIITEYVRNGTLRDHLDGARGTKLNFNQRLEIVIDVCHGLTYLHSYAERQIIHRDIKSSNILLTDSMRAKVADFGFARGGPTDSNQTHILTQVKGTVGYLDPEYMKTYHLTAKSDVYSFGILLVEILTGRRPVEAKRLPDERITVRWAFDKYNEGRVFELVDPNARERVDEKILRKMFSLAFQCAAPTKKERPDMEAVGKQLWAIRSSYLRRSME.

The N-terminal stretch at 1-30 (MGGDDLSFTRLVITALFGLLMLLQIKETSA) is a signal peptide. The segment covering 166 to 178 (VSSFEMSPSSEKI) has biased composition (polar residues). Positions 166 to 209 (VSSFEMSPSSEKIPQSPFRAPPSPSRVPQSPSRYAMSPRPSRLG) are disordered. A Phosphothreonine modification is found at threonine 214. Residues 225–499 (FADSHQIGEG…MEAVGKQLWA (275 aa)) enclose the Protein kinase domain. ATP-binding positions include 231 to 239 (IGEGGFGVV) and lysine 253. The segment at 240–265 (FKGVLDDGQVVAIKRAKKEHFENLRT) is caM-binding. Catalysis depends on aspartate 350, which acts as the Proton acceptor. At serine 354 the chain carries Phosphoserine. Phosphothreonine is present on residues threonine 386 and threonine 391. Tyrosine 399 is modified (phosphotyrosine).

It belongs to the protein kinase superfamily. Ser/Thr protein kinase family. Interacts with calmodulin (CaM) in a Ca(2+)-dependent manner.

The protein localises to the cytoplasm. It catalyses the reaction L-seryl-[protein] + ATP = O-phospho-L-seryl-[protein] + ADP + H(+). The catalysed reaction is L-threonyl-[protein] + ATP = O-phospho-L-threonyl-[protein] + ADP + H(+). The chain is Calmodulin-binding receptor-like cytoplasmic kinase 3 (CRCK3) from Arabidopsis thaliana (Mouse-ear cress).